The following is a 312-amino-acid chain: Probable deoxyhypusine synthase (312 aa).

The active-site Nucleophile is K285.

The protein belongs to the deoxyhypusine synthase family. Requires NAD(+) as cofactor.

It catalyses the reaction [eIF5A protein]-L-lysine + spermidine = [eIF5A protein]-deoxyhypusine + propane-1,3-diamine. It participates in protein modification; eIF5A hypusination. In terms of biological role, catalyzes the NAD-dependent oxidative cleavage of spermidine and the subsequent transfer of the butylamine moiety of spermidine to the epsilon-amino group of a specific lysine residue of the eIF-5A precursor protein to form the intermediate deoxyhypusine residue. This Saccharolobus islandicus (strain Y.N.15.51 / Yellowstone #2) (Sulfolobus islandicus) protein is Probable deoxyhypusine synthase.